Reading from the N-terminus, the 327-residue chain is Phenylalanine--tRNA ligase alpha subunit (327 aa).

A Mg(2+)-binding site is contributed by glutamate 252.

The protein belongs to the class-II aminoacyl-tRNA synthetase family. Phe-tRNA synthetase alpha subunit type 1 subfamily. In terms of assembly, tetramer of two alpha and two beta subunits. Requires Mg(2+) as cofactor.

It localises to the cytoplasm. It catalyses the reaction tRNA(Phe) + L-phenylalanine + ATP = L-phenylalanyl-tRNA(Phe) + AMP + diphosphate + H(+). The protein is Phenylalanine--tRNA ligase alpha subunit of Tolumonas auensis (strain DSM 9187 / NBRC 110442 / TA 4).